Reading from the N-terminus, the 199-residue chain is Recombination protein RecR (199 aa).

A C4-type zinc finger spans residues 58–73 (CSVCYNLSETELCRIC). The Toprim domain occupies 81-176 (TRLCVVEQPR…EITRLARGIT (96 aa)).

Belongs to the RecR family.

May play a role in DNA repair. It seems to be involved in an RecBC-independent recombinational process of DNA repair. It may act with RecF and RecO. The chain is Recombination protein RecR from Rhodopirellula baltica (strain DSM 10527 / NCIMB 13988 / SH1).